The sequence spans 387 residues: Protein arginine N-methyltransferase 1 (387 aa).

The disordered stretch occupies residues 1–60 (MDQRKGSGSDANGGLAEATASRLRFEDPDEVMEENPAAAAATVGAEEEGGEGGGGEEVIG). The span at 34–44 (ENPAAAAATVG) shows a compositional bias: low complexity. Positions 66-387 (ADYYFDSYSH…VSRTQHYKMR (322 aa)) constitute an SAM-dependent MTase PRMT-type domain. Residues histidine 79, arginine 88, glycine 112, glutamate 134, and glutamate 163 each coordinate S-adenosyl-L-methionine. Residues glutamate 178 and glutamate 187 contribute to the active site.

The protein belongs to the class I-like SAM-binding methyltransferase superfamily. Protein arginine N-methyltransferase family.

Its subcellular location is the nucleus. The catalysed reaction is L-arginyl-[protein] + S-adenosyl-L-methionine = N(omega)-methyl-L-arginyl-[protein] + S-adenosyl-L-homocysteine + H(+). It carries out the reaction L-arginyl-[protein] + 2 S-adenosyl-L-methionine = N(omega),N(omega)-dimethyl-L-arginyl-[protein] + 2 S-adenosyl-L-homocysteine + 2 H(+). In terms of biological role, arginine methyltransferase that methylates (mono and asymmetric dimethylation) the guanidino nitrogens of arginyl residues present in target proteins. This is Protein arginine N-methyltransferase 1 (PRMT1) from Oryza sativa subsp. indica (Rice).